Here is a 409-residue protein sequence, read N- to C-terminus: Peptidase T (409 aa).

Residue histidine 78 participates in Zn(2+) binding. Aspartate 80 is a catalytic residue. Aspartate 141 is a binding site for Zn(2+). Residue glutamate 175 is the Proton acceptor of the active site. Residues glutamate 176, aspartate 198, and histidine 380 each coordinate Zn(2+).

The protein belongs to the peptidase M20B family. Zn(2+) is required as a cofactor.

Its subcellular location is the cytoplasm. The catalysed reaction is Release of the N-terminal residue from a tripeptide.. Its function is as follows. Cleaves the N-terminal amino acid of tripeptides. The sequence is that of Peptidase T from Caldanaerobacter subterraneus subsp. tengcongensis (strain DSM 15242 / JCM 11007 / NBRC 100824 / MB4) (Thermoanaerobacter tengcongensis).